Reading from the N-terminus, the 278-residue chain is Dehydrogenase/reductase SDR family member 4 (278 aa).

36–60 (LVTASTDGIGFAIARRLAQDGAHVV) provides a ligand contact to NADP(+). An N6-acetyllysine; alternate modification is found at Lys-92. An N6-succinyllysine; alternate modification is found at Lys-92. Lys-105 carries the N6-acetyllysine modification. Ile-140 bears the Phosphoserine mark. Ser-169 is a substrate binding site. Tyr-182 serves as the catalytic Proton acceptor. Lys-186 contributes to the NADP(+) binding site. Lys-216 bears the N6-acetyllysine; alternate mark. At Lys-216 the chain carries N6-succinyllysine; alternate. At Ser-220 the chain carries Phosphoserine. An N6-succinyllysine mark is found at Lys-227 and Lys-234. The Peroxisomal targeting signal signature appears at 276-278 (SRL).

It belongs to the short-chain dehydrogenases/reductases (SDR) family. In terms of assembly, homotetramer. Predominantly expressed in normal cervix (at protein level). As to expression, expressed in some neoplastic cervical tissues, but not in normal cervix (at protein level). In terms of tissue distribution, expressed in a few neoplastic cervical tissues. High expression in liver.

The protein resides in the peroxisome. Its subcellular location is the nucleus. It catalyses the reaction a secondary alcohol + NADP(+) = a ketone + NADPH + H(+). It carries out the reaction 3beta-hydroxy-5beta-pregnane-20-one + NADP(+) = 5beta-pregnan-3,20-dione + NADPH + H(+). The catalysed reaction is 5beta-dihydrotestosterone + NADPH + H(+) = 5beta-androstane-3beta,17beta-diol + NADP(+). The enzyme catalyses 5beta-androstane-3,17-dione + NADPH + H(+) = 3beta-hydroxy-5beta-androstane-17-one + NADP(+). It catalyses the reaction isatin + NADPH + H(+) = 3-hydroxyindolin-2-one + NADP(+). It carries out the reaction lithocholate + NADP(+) = 3-oxo-5beta-cholan-24-oate + NADPH + H(+). The catalysed reaction is 3-oxo-5beta-cholan-24-oate + NADPH + H(+) = isolithocholate + NADP(+). Its activity is regulated as follows. Inhibited by flavonoids (quercetin and genistein), cetylpyridium chloride, phenylhexane and valproic acid. Low inhibition is observed with fatty acids (myristic acid and lauric acid). No significant inhibition is observed with barbital, dicumarol, indomethacin, metyrapone, ethacrynic acid, disulfiram, hexestrol and benzodiazepines (diazepam and nitrazepam). Functionally, NADPH-dependent oxidoreductase which catalyzes the reduction of a variety of compounds bearing carbonyl groups including ketosteroids, alpha-dicarbonyl compounds, aldehydes, aromatic ketones and quinones. Reduces 3-ketosteroids and benzil into 3beta-hydroxysteroids and R-benzoin, respectively, in contrast to the stereoselectivity of non-primate DHRS4s which produce 3alpha-hydroxysteroids and S-benzoin. Diplays low activity toward all-trans-retinal and no activity toward 9-cis-retinal as compared to non-primate mammals. In the reverse reaction, catalyze the NAD-dependent oxidation of 3beta-hydroxysteroids and alcohol, but with much lower efficiency. Involved in the metabolism of 3beta-hydroxysteroids, isatin and xenobiotic carbonyl compounds. No detected catalytic activity in vitro, possibly due to the lack of catalytic site. Its function is as follows. NADPH-dependent oxidoreductase which catalyzes the reduction of a variety of compounds bearing carbonyl groups including ketosteroids, alpha-dicarbonyl compounds, aldehydes, aromatic ketones and quinones. Involved in the metabolism of 3beta-hydroxysteroids, isatin and xenobiotic carbonyl compounds. Has a higher catalytic activity for xenobiotic alpha-dicarbonyl compounds, sucha as benzil, than isoform 1 and is involved in benzil detoxification. This Homo sapiens (Human) protein is Dehydrogenase/reductase SDR family member 4.